A 673-amino-acid chain; its full sequence is UvrABC system protein B (673 aa).

Positions 24–182 (EGVERNDPAQ…YSFVEILYNR (159 aa)) constitute a Helicase ATP-binding domain. 37–44 (GVTGSGKT) lines the ATP pocket. The short motif at 90 to 113 (YYDYYQPEAFMPTSGLYIEKDLAI) is the Beta-hairpin element. Residues 429–591 (QIDDLLDEIQ…ITPITVNKSK (163 aa)) form the Helicase C-terminal domain. The UVR domain occupies 634–669 (TKMIDRAKKDMDKAAKDLDFVEAARYRDEMFALQKI).

The protein belongs to the UvrB family. In terms of assembly, forms a heterotetramer with UvrA during the search for lesions. Interacts with UvrC in an incision complex.

Its subcellular location is the cytoplasm. The UvrABC repair system catalyzes the recognition and processing of DNA lesions. A damage recognition complex composed of 2 UvrA and 2 UvrB subunits scans DNA for abnormalities. Upon binding of the UvrA(2)B(2) complex to a putative damaged site, the DNA wraps around one UvrB monomer. DNA wrap is dependent on ATP binding by UvrB and probably causes local melting of the DNA helix, facilitating insertion of UvrB beta-hairpin between the DNA strands. Then UvrB probes one DNA strand for the presence of a lesion. If a lesion is found the UvrA subunits dissociate and the UvrB-DNA preincision complex is formed. This complex is subsequently bound by UvrC and the second UvrB is released. If no lesion is found, the DNA wraps around the other UvrB subunit that will check the other stand for damage. The polypeptide is UvrABC system protein B (Cytophaga hutchinsonii (strain ATCC 33406 / DSM 1761 / CIP 103989 / NBRC 15051 / NCIMB 9469 / D465)).